The primary structure comprises 106 residues: Urease subunit beta (106 aa).

The protein belongs to the urease beta subunit family. Heterotrimer of UreA (gamma), UreB (beta) and UreC (alpha) subunits. Three heterotrimers associate to form the active enzyme.

The protein localises to the cytoplasm. The enzyme catalyses urea + 2 H2O + H(+) = hydrogencarbonate + 2 NH4(+). It functions in the pathway nitrogen metabolism; urea degradation; CO(2) and NH(3) from urea (urease route): step 1/1. In Acinetobacter baumannii (strain SDF), this protein is Urease subunit beta.